The primary structure comprises 1453 residues: ABC transporter G family member 34 (1453 aa).

The tract at residues 1 to 24 is disordered; sequence MLGRDEDLVRTMSGRGSLGSTSHR. The 274-residue stretch at 173–446 folds into the ABC transporter 1 domain; it reads LGLFHLLPSK…FEYMGFKCPE (274 aa). Residue 206-213 coordinates ATP; that stretch reads GPPSSGKT. Positions 524 to 737 constitute an ABC transmembrane type-2 1 domain; it reads DLFKACFDRE…GQTALVINEF (214 aa). The next 6 helical transmembrane spans lie at 542–562, 582–602, 621–641, 661–681, 687–707, and 773–793; these read FVYVFKTVQITIMSLIAMTVY, LFFSLINLMFNGMAELAFTVM, FALPGFLLKIPLSLIESVIWI, LLAYFCVNQMALSLFRFLGAL, IANSGGTLALLVVFVLGGFII, and FWICIGALLGFTVLFNFCYII. The ABC transporter 2 domain occupies 852-1105; that stretch reads LAFNNVNYYV…LVEYFEAIEG (254 aa). 897-904 is a binding site for ATP; the sequence is GVSGAGKT. Positions 1177-1391 constitute an ABC transmembrane type-2 2 domain; sequence TQTKACFWKM…TLYGIITSQV (215 aa). 7 helical membrane passes run 1196–1216, 1230–1250, 1289–1309, 1311–1331, 1341–1361, 1366–1386, and 1422–1442; these read YNAIRFLMTVVIGVLFGLLFW, NFFGAMYAAVLFLGATNAATV, IQTGVYTLILYSMIGYDWTVV, FFWFYYYMLTCFVYFTLYGMM, IAGICLSFFLSFWNLFSGFLI, IPIWWRWYYWASPVAWTLYGI, and FLPVVAVVHIAWILIFLFAFA.

It belongs to the ABC transporter superfamily. ABCG family. PDR (TC 3.A.1.205) subfamily. In terms of tissue distribution, expressed in roots at low levels.

It is found in the membrane. Its function is as follows. May be a general defense protein. The polypeptide is ABC transporter G family member 34 (ABCG34) (Arabidopsis thaliana (Mouse-ear cress)).